Consider the following 217-residue polypeptide: Homologous-pairing protein 2 homolog (217 aa).

Residues 89-117 (LDASIMALTAKVQGLQQSCRHMEAELKEL) form an interaction with NR3C1, homodimerization and transcriptional activation almost abolished when missing region. Positions 93–153 (IMALTAKVQG…LKNIKAATNH (61 aa)) form a coiled coil. The DNA-binding stretch occupies residues 118 to 182 (TSALTTPEMQ…WRKRKRMTTE (65 aa)). The interaction with NR3C1 decreased when missing stretch occupies residues 118 to 182 (TSALTTPEMQ…WRKRKRMTTE (65 aa)).

It belongs to the HOP2 family. Forms a stable heterodimer with MND1. Interacts with PSMC3/TBP1. Interacts with the DNA-binding domain of the nuclear receptors NR3C1/GR, ESR2/ER-beta, THRB and RXRA. Post-translationally, phosphorylated by PKA, PKC and MAPK.

The protein resides in the nucleus. Plays an important role in meiotic recombination. Stimulates DMC1-mediated strand exchange required for pairing homologous chromosomes during meiosis. The complex PSMC3IP/MND1 binds DNA, stimulates the recombinase activity of DMC1 as well as DMC1 D-loop formation from double-strand DNA. This complex stabilizes presynaptic RAD51 and DMC1 filaments formed on single strand DNA to capture double-strand DNA. This complex stimulates both synaptic and presynaptic critical steps in RAD51 and DMC1-promoted homologous pairing. May inhibit HIV-1 viral protein TAT activity and modulate the activity of proteasomes through association with PSMC3. Plays a role as a coactivator in nuclear receptor-mediated transcription. The polypeptide is Homologous-pairing protein 2 homolog (Psmc3ip) (Rattus norvegicus (Rat)).